The primary structure comprises 261 residues: Cytochrome c oxidase subunit 3 (261 aa).

The Mitochondrial matrix portion of the chain corresponds to 1 to 15 (MTHQTHAYHMVNPSP). A helical membrane pass occupies residues 16 to 34 (WPLTGALSALLMTSGLIMW). The Mitochondrial intermembrane portion of the chain corresponds to 35 to 40 (FHFNSV). The chain crosses the membrane as a helical span at residues 41-66 (ALLTLGLTTNMLTMYQWWRDVIREST). At 67–72 (FQGHHT) the chain is on the mitochondrial matrix side. The helical transmembrane segment at 73-105 (PNVQKGLRYGMILFIISEVLFFTGFFWAFYHSS) threads the bilayer. The Mitochondrial intermembrane portion of the chain corresponds to 106–128 (LAPTPELGGCWPPTGIHPLNPLE). A helical transmembrane segment spans residues 129-152 (VPLLNTSVLLASGVSITWAHHSLM). Residues 153–155 (EGN) are Mitochondrial matrix-facing. A helical membrane pass occupies residues 156-183 (RNHMLQALFITIALGVYFTLLQASEYYE). The Mitochondrial intermembrane portion of the chain corresponds to 184-190 (APFTISD). The chain crosses the membrane as a helical span at residues 191–223 (GVYGSTFFVATGFHGLHVIIGSTFLIVCFFRQL). Residues 224–232 (KFHFTSSHH) are Mitochondrial matrix-facing. The helical transmembrane segment at 233 to 256 (FGFEAAAWYWHFVDVVWLFLYVSI) threads the bilayer. Topologically, residues 257 to 261 (YWWGS) are mitochondrial intermembrane.

It belongs to the cytochrome c oxidase subunit 3 family. As to quaternary structure, component of the cytochrome c oxidase (complex IV, CIV), a multisubunit enzyme composed of 14 subunits. The complex is composed of a catalytic core of 3 subunits MT-CO1, MT-CO2 and MT-CO3, encoded in the mitochondrial DNA, and 11 supernumerary subunits COX4I, COX5A, COX5B, COX6A, COX6B, COX6C, COX7A, COX7B, COX7C, COX8 and NDUFA4, which are encoded in the nuclear genome. The complex exists as a monomer or a dimer and forms supercomplexes (SCs) in the inner mitochondrial membrane with NADH-ubiquinone oxidoreductase (complex I, CI) and ubiquinol-cytochrome c oxidoreductase (cytochrome b-c1 complex, complex III, CIII), resulting in different assemblies (supercomplex SCI(1)III(2)IV(1) and megacomplex MCI(2)III(2)IV(2)).

The protein resides in the mitochondrion inner membrane. It carries out the reaction 4 Fe(II)-[cytochrome c] + O2 + 8 H(+)(in) = 4 Fe(III)-[cytochrome c] + 2 H2O + 4 H(+)(out). Functionally, component of the cytochrome c oxidase, the last enzyme in the mitochondrial electron transport chain which drives oxidative phosphorylation. The respiratory chain contains 3 multisubunit complexes succinate dehydrogenase (complex II, CII), ubiquinol-cytochrome c oxidoreductase (cytochrome b-c1 complex, complex III, CIII) and cytochrome c oxidase (complex IV, CIV), that cooperate to transfer electrons derived from NADH and succinate to molecular oxygen, creating an electrochemical gradient over the inner membrane that drives transmembrane transport and the ATP synthase. Cytochrome c oxidase is the component of the respiratory chain that catalyzes the reduction of oxygen to water. Electrons originating from reduced cytochrome c in the intermembrane space (IMS) are transferred via the dinuclear copper A center (CU(A)) of subunit 2 and heme A of subunit 1 to the active site in subunit 1, a binuclear center (BNC) formed by heme A3 and copper B (CU(B)). The BNC reduces molecular oxygen to 2 water molecules using 4 electrons from cytochrome c in the IMS and 4 protons from the mitochondrial matrix. The polypeptide is Cytochrome c oxidase subunit 3 (MT-CO3) (Nanger dama (Dama gazelle)).